We begin with the raw amino-acid sequence, 1036 residues long: Chitin synthase 1 (1036 aa).

The span at 1–10 shows a compositional bias: pro residues; sequence MDGPPSPTRV. The interval 1-153 is disordered; that stretch reads MDGPPSPTRV…RRPLPPAPLF (153 aa). Residue asparagine 38 is glycosylated (N-linked (GlcNAc...) asparagine). The span at 86–108 shows a compositional bias: low complexity; that stretch reads PSIPLSSSNPRSPIRPSTPSRVS. Residue asparagine 179 is glycosylated (N-linked (GlcNAc...) asparagine). Positions 189-229 are disordered; it reads RASLKSAHSYTTDSTFTEDDDITNEKLNHYGPAPEGRQDRR. Polar residues predominate over residues 194–203; that stretch reads SAHSYTTDST. 7 consecutive transmembrane segments (helical) span residues 659–679, 699–719, 733–753, 776–796, 808–828, 908–928, and 945–967; these read FISL…FYFV, IFVI…ILSL, TMVT…YIVI, IFTN…LMSF, SAQY…YAFC, YVVA…SEAY, and WSVA…INIV. Residues 994-1019 form a disordered region; that stretch reads AGLGSGFSESGKTGITSGSGMSGMSL. A compositionally biased stretch (low complexity) spans 1001–1019; the sequence is SESGKTGITSGSGMSGMSL.

This sequence belongs to the chitin synthase family. Class II subfamily.

The protein resides in the cell membrane. It carries out the reaction [(1-&gt;4)-N-acetyl-beta-D-glucosaminyl](n) + UDP-N-acetyl-alpha-D-glucosamine = [(1-&gt;4)-N-acetyl-beta-D-glucosaminyl](n+1) + UDP + H(+). In terms of biological role, polymerizes chitin, a structural polymer of the cell wall and septum, by transferring the sugar moiety of UDP-GlcNAc to the non-reducing end of the growing chitin polymer. CHS1 mainly responsible for normal yeast cell reproductive growth. The protein is Chitin synthase 1 of Exophiala dermatitidis (strain ATCC 34100 / CBS 525.76 / NIH/UT8656) (Black yeast).